The chain runs to 144 residues: Bradykinin-potentiating and C-type natriuretic peptides isoform 2 (144 aa).

The N-terminal stretch at 1-23 (MVLSRLAASGLLLLALLALSVDG) is a signal peptide. A propeptide spanning residues 24-30 (KPVQQWA) is cleaved from the precursor. Glutamine 31 bears the Pyrrolidone carboxylic acid mark. Positions 41–47 (LLVQQWA) are excised as a propeptide. Glutamine 48 carries the post-translational modification Pyrrolidone carboxylic acid. Positions 61 to 67 (LTVQQWA) are excised as a propeptide. At glutamine 68 the chain carries Pyrrolidone carboxylic acid. A propeptide spanning residues 78–84 (LTVQQWA) is cleaved from the precursor. The disordered stretch occupies residues 81–110 (QQWAQGRPPGPPIPPLTVQQWAQARPPHPP). Residue glutamine 85 is modified to Pyrrolidone carboxylic acid. The propeptide occupies 96–102 (LTVQQWA). Glutamine 103 bears the Pyrrolidone carboxylic acid mark. Residues 114 to 116 (APL) constitute a propeptide that is removed on maturation. Glutamine 117 is subject to Pyrrolidone carboxylic acid. Residue valine 122 is a propeptide. Pyrrolidone carboxylic acid is present on glutamine 123. Residues 128 to 144 (VQKWAPVQKWAPLLQPT) constitute a propeptide that is removed on maturation.

This sequence in the N-terminal section; belongs to the bradykinin-potentiating peptide family. Expressed by venom gland.

It is found in the secreted. Its subcellular location is the cytoplasm. It localises to the cytosol. In terms of biological role, peptide with several activities. It inhibits the activity of the angiotensin-converting enzyme (ACE) by a preferential interaction with its C-domain. It evokes transient hypotension (-14 mmHg) similar to that evoked by 0.5 ug of bradykinin, when injected alone into rats. It has a high bradykinin-potentiating effect (120%), when 60 nmol of BPP-10c are coinjected with 0.5 ug of bradykinin into rats. Does not affect angiotensin-1 pressor effects. Shows potent and long-lasting antihypertensive activity as well as a reduction of the heart rate. It also binds and dose-dependently promotes the activation of cytosolic argininosuccinate synthase (ASS1), an enzyme that catalyzes the conversion of citrulline, L-aspartate and ATP to argininosuccinate, AMP and pyrophosphate. It also enhances ASS1-dependent arginine production in HEK 293 cells, as well as in spontaneous hypertensive rat (SHR) and Wistar rat plasma. In addition, it induces the production of nitric-oxide (NO) by HUVEC cells via the endothelial nitric-oxide synthase (NOS3), which use arginine as a substrate and produce NO. It has been shown to be internalized by ASS1-expressing endothelial (HUVEC) and kidney (HEK 293) cells, and is detected homogenously distributed within the cell cytoplasm for up to 2 hours. Functionally, acts as indirect hypotensive agent. Increases leukocyte rolling flux and adhesion by five-fold in post-capillary venules, without any increments in vasodilation of arterioles. Acts as indirect hypotensive agent. Potently induces vasodilation of arterioles, with only a small increase in leukocyte rolling flux. The protein is Bradykinin-potentiating and C-type natriuretic peptides isoform 2 of Bothrops jararacussu (Jararacussu).